The following is a 58-amino-acid chain: UPF0391 membrane protein OCAR_5266/OCA5_c27040 (58 aa).

The next 2 helical transmembrane spans lie at 4 to 24 (WVVT…GGIA) and 30 to 50 (IAKI…VVGL).

This sequence belongs to the UPF0391 family.

It localises to the cell membrane. This Afipia carboxidovorans (strain ATCC 49405 / DSM 1227 / KCTC 32145 / OM5) (Oligotropha carboxidovorans) protein is UPF0391 membrane protein OCAR_5266/OCA5_c27040.